The chain runs to 394 residues: RNA-binding motif protein, X-linked-like-2 (394 aa).

Residues 8 to 86 form the RRM domain; sequence GKLFIGGLNL…KAIKVAQATK (79 aa). The span at 67–78 shows a compositional bias: basic and acidic residues; it reads RDMNGKSLDGKA. Residues 67 to 394 form a disordered region; sequence RDMNGKSLDG…MERGGGRSRY (328 aa). Residues 150-165 are compositionally biased toward pro residues; that stretch reads RGPPPPPRRAGPPPKR. Basic and acidic residues-rich tracts occupy residues 196-231 and 239-285; these read PRREPPPPRRDPYLGPRDEGYSSRDGYSSRDYREPR and EYTH…REPF. Residues 321–333 are compositionally biased toward low complexity; that stretch reads YSGGRDSYSSSYG. Composition is skewed to basic and acidic residues over residues 334 to 350 and 383 to 394; these read RSDRYSRGRDRVGRPDR and GRMERGGGRSRY.

Its subcellular location is the nucleus. The chain is RNA-binding motif protein, X-linked-like-2 (RBMXL2) from Macaca fascicularis (Crab-eating macaque).